Here is a 755-residue protein sequence, read N- to C-terminus: Cellulose synthase-like protein B3 (755 aa).

A run of 2 helical transmembrane segments spans residues 24-44 (VVDLTILGFLFSLLLYRILLM) and 51-71 (WVVAFLCESFFSFIWLLITSI). Residues Asp136 and Asp461 contribute to the active site. Transmembrane regions (helical) follow at residues 534-556 (YLYIFTWGLRSIPELIYCLLPAY), 569-589 (VYLGIVVTLVGMHCLYSLWEF), 615-635 (LFSIPDIILKLLGISKTVFIV), 674-694 (FLPGTFILLVNLAALAGCSVG), 702-722 (GSGLAEACGCILVVILFLPFL), and 733-753 (IPWSTLSKAAFLAVLFVVFSV).

Belongs to the glycosyltransferase 2 family. Plant cellulose synthase-like B subfamily. Expressed in young seedlings, primarily in the vascular tissue.

It localises to the golgi apparatus membrane. Thought to be a Golgi-localized beta-glycan synthase that polymerize the backbones of noncellulosic polysaccharides (hemicelluloses) of plant cell wall. The chain is Cellulose synthase-like protein B3 (CSLB3) from Arabidopsis thaliana (Mouse-ear cress).